Here is a 340-residue protein sequence, read N- to C-terminus: Mitochondrial glycine transporter (340 aa).

Solcar repeat units follow at residues 23–108 (PKTL…ARNG), 128–218 (LSPF…FKND), and 237–325 (RSTI…LIKS). Transmembrane regions (helical) follow at residues 29-54 (LISG…TRLQ), 83-109 (GALP…RNGI), 134-159 (LATG…TRYE), 193-216 (GSFA…ELFK), 241-267 (INTS…KTRL), and 300-318 (GLSL…SWCI).

This sequence belongs to the mitochondrial carrier (TC 2.A.29) family. SLC25A38 subfamily.

It localises to the mitochondrion inner membrane. The catalysed reaction is glycine(in) = glycine(out). Its function is as follows. Mitochondrial glycine transporter that imports glycine into the mitochondrial matrix. Plays an important role in providing glycine for the first enzymatic step in heme biosynthesis, the condensation of glycine with succinyl-CoA to produce 5-aminolevulinate (ALA) in the mitochondrial matrix. The sequence is that of Mitochondrial glycine transporter from Debaryomyces hansenii (strain ATCC 36239 / CBS 767 / BCRC 21394 / JCM 1990 / NBRC 0083 / IGC 2968) (Yeast).